A 156-amino-acid polypeptide reads, in one-letter code: Small ribosomal subunit protein uS7 (156 aa).

It belongs to the universal ribosomal protein uS7 family. As to quaternary structure, part of the 30S ribosomal subunit. Contacts proteins S9 and S11.

Its function is as follows. One of the primary rRNA binding proteins, it binds directly to 16S rRNA where it nucleates assembly of the head domain of the 30S subunit. Is located at the subunit interface close to the decoding center, probably blocks exit of the E-site tRNA. This is Small ribosomal subunit protein uS7 from Salmonella choleraesuis (strain SC-B67).